Consider the following 294-residue polypeptide: Phosphatidylserine decarboxylase proenzyme (294 aa).

Active-site charge relay system; for autoendoproteolytic cleavage activity residues include Asp100, His157, and Ser261. Catalysis depends on Ser261, which acts as the Schiff-base intermediate with substrate; via pyruvic acid; for decarboxylase activity. Ser261 carries the pyruvic acid (Ser); by autocatalysis modification.

The protein belongs to the phosphatidylserine decarboxylase family. PSD-B subfamily. Prokaryotic type I sub-subfamily. As to quaternary structure, heterodimer of a large membrane-associated beta subunit and a small pyruvoyl-containing alpha subunit. The cofactor is pyruvate. In terms of processing, is synthesized initially as an inactive proenzyme. Formation of the active enzyme involves a self-maturation process in which the active site pyruvoyl group is generated from an internal serine residue via an autocatalytic post-translational modification. Two non-identical subunits are generated from the proenzyme in this reaction, and the pyruvate is formed at the N-terminus of the alpha chain, which is derived from the carboxyl end of the proenzyme. The autoendoproteolytic cleavage occurs by a canonical serine protease mechanism, in which the side chain hydroxyl group of the serine supplies its oxygen atom to form the C-terminus of the beta chain, while the remainder of the serine residue undergoes an oxidative deamination to produce ammonia and the pyruvoyl prosthetic group on the alpha chain. During this reaction, the Ser that is part of the protease active site of the proenzyme becomes the pyruvoyl prosthetic group, which constitutes an essential element of the active site of the mature decarboxylase.

The protein resides in the cell membrane. It catalyses the reaction a 1,2-diacyl-sn-glycero-3-phospho-L-serine + H(+) = a 1,2-diacyl-sn-glycero-3-phosphoethanolamine + CO2. It functions in the pathway phospholipid metabolism; phosphatidylethanolamine biosynthesis; phosphatidylethanolamine from CDP-diacylglycerol: step 2/2. In terms of biological role, catalyzes the formation of phosphatidylethanolamine (PtdEtn) from phosphatidylserine (PtdSer). This chain is Phosphatidylserine decarboxylase proenzyme, found in Histophilus somni (strain 2336) (Haemophilus somnus).